We begin with the raw amino-acid sequence, 431 residues long: D-inositol 3-phosphate glycosyltransferase (431 aa).

His-21 serves as a coordination point for 1D-myo-inositol 3-phosphate. Residues 27–28 and Gly-35 contribute to the UDP-N-acetyl-alpha-D-glucosamine site; that span reads QP. Residues 32-37, Arg-90, Tyr-123, Thr-147, and Arg-167 contribute to the 1D-myo-inositol 3-phosphate site; that span reads DAGGMN. Residues Arg-241, Lys-246, and Gln-307 each coordinate UDP-N-acetyl-alpha-D-glucosamine. Residues Tyr-316, Arg-317, and Ala-319 each contribute to the Mg(2+) site. Residues Glu-329 and Glu-337 each contribute to the UDP-N-acetyl-alpha-D-glucosamine site. A Mg(2+)-binding site is contributed by Thr-343.

The protein belongs to the glycosyltransferase group 1 family. MshA subfamily. As to quaternary structure, homodimer.

It carries out the reaction 1D-myo-inositol 3-phosphate + UDP-N-acetyl-alpha-D-glucosamine = 1D-myo-inositol 2-acetamido-2-deoxy-alpha-D-glucopyranoside 3-phosphate + UDP + H(+). Its function is as follows. Catalyzes the transfer of a N-acetyl-glucosamine moiety to 1D-myo-inositol 3-phosphate to produce 1D-myo-inositol 2-acetamido-2-deoxy-glucopyranoside 3-phosphate in the mycothiol biosynthesis pathway. This chain is D-inositol 3-phosphate glycosyltransferase, found in Saccharomonospora viridis (strain ATCC 15386 / DSM 43017 / JCM 3036 / CCUG 5913 / NBRC 12207 / NCIMB 9602 / P101) (Thermoactinomyces viridis).